An 84-amino-acid polypeptide reads, in one-letter code: Mitochondrial import inner membrane translocase subunit tim9 (84 aa).

The short motif at 35–59 (CFSDCVQDFTSSKLSNKESECIAKC) is the Twin CX3C motif element. Cystine bridges form between Cys-35/Cys-59 and Cys-39/Cys-55.

Belongs to the small Tim family. In terms of assembly, heterohexamer; composed of 3 copies of TIM9 and 3 copies of TIM10, named soluble 70 kDa complex. Associates with the TIM22 complex, whose core is composed of TIM22 and TIM54. Interacts with the transmembrane regions of multi-pass transmembrane proteins in transit.

It localises to the mitochondrion inner membrane. Functionally, mitochondrial intermembrane chaperone that participates in the import and insertion of multi-pass transmembrane proteins into the mitochondrial inner membrane. Also required for the transfer of beta-barrel precursors from the TOM complex to the sorting and assembly machinery (SAM complex) of the outer membrane. Acts as a chaperone-like protein that protects the hydrophobic precursors from aggregation and guide them through the mitochondrial intermembrane space. The chain is Mitochondrial import inner membrane translocase subunit tim9 (tim9) from Schizosaccharomyces pombe (strain 972 / ATCC 24843) (Fission yeast).